We begin with the raw amino-acid sequence, 485 residues long: MGKFVEKLENAIRGYTFDDVLLIPQPTEVEPKDVDVSTQITPNVKLNIPILSAAMDTVTEWEMAVAMAREGGLGVIHRNMSIEEQVEQVKRVKRAERFIVEDVITIAPDETIDYALFLMEKHGIDGLPVVEEDRVVGIITKKDIAAREGRTVKELMTREVITVPESVDVEEALKIMMENRIDRLPVVNEDGKLVGLITMSDLVARKKYKNAVRNEKGELLVAAAVSPFDLRRAIELDRAGVDVIVVDTAHAHNLKAIKAMKEMRQKVSADFIVGNIANPKAVDDLTFADAVKVGIGPGSICTTRIVAGVGVPQITAIAMVADRAQEYGLYVIADGGIKYSGDIVKAIAAGADAVMLGNLLAGTKEAPGKEVIINGRKYKQYRGMGSLGAMMKGGAERYYQGGYMKTRKFVPEGVEGVVPYRGTVSEVLYQLVGGLKAGMGYVGARNIKELKEKGEFVIITSAGLRESHPHDIIITNEAPNYPLER.

2 consecutive CBS domains span residues 99–154 and 156–212; these read IVED…TVKE and MTRE…KNAV. Residues aspartate 247 and 294-296 each bind NAD(+); that span reads GIG. Residues glycine 296 and glycine 298 each contribute to the K(+) site. Serine 299 contributes to the IMP binding site. Position 301 (cysteine 301) interacts with K(+). Cysteine 301 (thioimidate intermediate) is an active-site residue. IMP contacts are provided by residues 334–336, 357–358, and 381–385; these read DGG, GN, and YRGMG. Arginine 397 (proton acceptor) is an active-site residue. Glutamate 412 contacts IMP. Residues glutamate 466, serine 467, and histidine 468 each coordinate K(+).

It belongs to the IMPDH/GMPR family. Homotetramer. K(+) is required as a cofactor.

The catalysed reaction is IMP + NAD(+) + H2O = XMP + NADH + H(+). It functions in the pathway purine metabolism; XMP biosynthesis via de novo pathway; XMP from IMP: step 1/1. With respect to regulation, mycophenolic acid (MPA) is a non-competitive inhibitor that prevents formation of the closed enzyme conformation by binding to the same site as the amobile flap. In contrast, mizoribine monophosphate (MZP) is a competitive inhibitor that induces the closed conformation. MPA is a potent inhibitor of mammalian IMPDHs but a poor inhibitor of the bacterial enzymes. MZP is a more potent inhibitor of bacterial IMPDH. Functionally, catalyzes the conversion of inosine 5'-phosphate (IMP) to xanthosine 5'-phosphate (XMP), the first committed and rate-limiting step in the de novo synthesis of guanine nucleotides, and therefore plays an important role in the regulation of cell growth. This is Inosine-5'-monophosphate dehydrogenase from Pyrococcus furiosus (strain ATCC 43587 / DSM 3638 / JCM 8422 / Vc1).